The following is a 624-amino-acid chain: Glycosyltransferase AglD (624 aa).

Asp-201 is an active-site residue. The next 8 helical transmembrane spans lie at 260–280, 285–305, 381–401, 427–447, 496–518, 532–552, 556–576, and 587–607; these read VTIV…TLYI, VISV…VIYV, LLTI…TGGL, AAYV…GIAL, VGLT…LLAL, FFAV…GGVG, IAFT…ALAA, and VTIV…TTAV.

This sequence belongs to the glycosyltransferase 2 family.

It localises to the cell membrane. Its pathway is cell surface structure biogenesis; S-layer biogenesis. In terms of biological role, involved in the assembly of a N-linked pentasaccharide that decorates the S-layer glycoprotein and flagellins. Catalyzes the addition of the mannose found at position 5 of the pentasaccharide to its own distinct dolichol phosphate carrier. This Haloferax volcanii (strain ATCC 29605 / DSM 3757 / JCM 8879 / NBRC 14742 / NCIMB 2012 / VKM B-1768 / DS2) (Halobacterium volcanii) protein is Glycosyltransferase AglD (aglD).